A 63-amino-acid polypeptide reads, in one-letter code: MAWLADYWWIILIILIGMLINGIKELRNVDHTRFLLNKPKLPPHRDNNDKWDDEDDDWPKKKP.

The chain crosses the membrane as a helical span at residues 3-23 (WLADYWWIILIILIGMLINGI). Residues 37 to 63 (NKPKLPPHRDNNDKWDDEDDDWPKKKP) are disordered.

It belongs to the UPF0370 family.

It is found in the cell membrane. This Pectobacterium carotovorum subsp. carotovorum (strain PC1) protein is UPF0370 protein PC1_1167.